The primary structure comprises 242 residues: Peptidyl-prolyl cis-trans isomerase FKBP20-2, chloroplastic (242 aa).

The N-terminal 31 residues, 1-31 (MVTILSTPLSPRLTFLCETKLSLSRSNRSVC), are a transit peptide targeting the chloroplast. Residues 32 to 67 (CSLSEEPKDQCLSRRSLVYVLVASPCLLLPALSSSA) constitute a thylakoid transit peptide. Positions 138–225 (GQQVTFHYIG…VFDVELLSIQ (88 aa)) constitute a PPIase FKBP-type domain. Cys227 and Cys241 are joined by a disulfide.

The protein belongs to the FKBP-type PPIase family. As to quaternary structure, interacts in vitro with LTO1.

Its subcellular location is the plastid. It is found in the chloroplast thylakoid lumen. It catalyses the reaction [protein]-peptidylproline (omega=180) = [protein]-peptidylproline (omega=0). PPIases accelerate the folding of proteins. It catalyzes the cis-trans isomerization of proline imidic peptide bonds in oligopeptides. Involved in the accumulation of the PSII complex. The protein is Peptidyl-prolyl cis-trans isomerase FKBP20-2, chloroplastic of Arabidopsis thaliana (Mouse-ear cress).